A 1827-amino-acid polypeptide reads, in one-letter code: Phenolphthiocerol/phthiocerol polyketide synthase subunit C (1827 aa).

Positions 35-461 constitute a Ketosynthase family 3 (KS3) domain; it reads CEPVAVVGIG…GTNAHVVVEQ (427 aa). Residues cysteine 207, histidine 342, and histidine 383 each act as for beta-ketoacyl synthase activity in the active site. Residues 566–876 form an acyltransferase region; sequence VFVYSGQGSQ…LAAVGVAASE (311 aa). The active-site For malonyltransferase activity is serine 654. An N-terminal hotdog fold region spans residues 910 to 1037; sequence HPLLGAHIEM…AKVEQSPREC (128 aa). The dehydratase stretch occupies residues 910-1076; sequence HPLLGAHIEM…QHHGPAFAAL (167 aa). In terms of domain architecture, PKS/mFAS DH spans 910–1198; it reads HPLLGAHIEM…LRRVERRAVP (289 aa). Residue histidine 942 is the Proton acceptor; for dehydratase activity of the active site. The interval 1050–1198 is C-terminal hotdog fold; sequence GTTVSPADFY…LRRVERRAVP (149 aa). Aspartate 1111 serves as the catalytic Proton donor; for dehydratase activity. The tract at residues 1439–1617 is beta-ketoacyl reductase; sequence ASYVVTGGLG…VINWGPWSEV (179 aa). 1440-1485 contacts NADP(+); that stretch reads SYVVTGGLGGLGLVVARWLVDRGAGRVVLGGRSDPTDEQCNVLAEL. The 80-residue stretch at 1706–1785 folds into the Carrier domain; the sequence is RAVTERMCAR…DLTADLMRQL (80 aa). Serine 1745 bears the O-(pantetheine 4'-phosphoryl)serine mark. Positions 1807–1820 are enriched in basic residues; sequence RAAARHGAAMRRRP. The disordered stretch occupies residues 1807 to 1827; the sequence is RAAARHGAAMRRRPKPEVQGG.

NADP(+) serves as cofactor. Pantetheine 4'-phosphate is required as a cofactor.

It catalyses the reaction icosanoyl-[(phenol)carboxyphthiodiolenone synthase] + 2 (S)-methylmalonyl-CoA + 3 malonyl-CoA + 5 NADPH + 10 H(+) = C32-carboxyphthiodiolenone-[(phenol)carboxyphthiodiolenone synthase] + 5 CO2 + 5 NADP(+) + 5 CoA + 2 H2O. The enzyme catalyses docosanoyl-[(phenol)carboxyphthiodiolenone synthase] + 2 (S)-methylmalonyl-CoA + 3 malonyl-CoA + 5 NADPH + 10 H(+) = C34-carboxyphthiodiolenone-[(phenol)carboxyphthiodiolenone synthase] + 5 CO2 + 5 NADP(+) + 5 CoA + 2 H2O. The catalysed reaction is 17-(4-hydroxyphenyl)heptadecanoyl-[(phenol)carboxyphthiodiolenone synthase] + 2 (S)-methylmalonyl-CoA + 3 malonyl-CoA + 5 NADPH + 10 H(+) = C35-(phenol)carboxyphthiodiolenone-[(phenol)carboxyphthiodiolenone synthase] + 5 CO2 + 5 NADP(+) + 5 CoA + 2 H2O. It carries out the reaction 19-(4-hydroxyphenyl)nonadecanoyl-[(phenol)carboxyphthiodiolenone synthase] + 2 (S)-methylmalonyl-CoA + 3 malonyl-CoA + 5 NADPH + 10 H(+) = C37-(phenol)carboxyphthiodiolenone-[(phenol)carboxyphthiodiolenone synthase] + 5 CO2 + 5 NADP(+) + 5 CoA + 2 H2O. The protein operates within lipid metabolism; fatty acid biosynthesis. Part of the PpsABCDE complex involved in the biosynthesis of the lipid core common to phthiocerols and phenolphthiocerols by successive additions of malonyl-CoA or methylmalonyl-CoA extender units. PpsA can accept as substrate the activated forms of either icosanoyl (C20), docosanoyl (C22) or lignoceroyl (C24) groups from FadD26, or a (4-hydroxyphenyl)-C17 or (4-hydroxyphenyl)-C19 fatty acyl from FadD29. PpsA initiates the biosynthesis and extends its substrate using a malonyl-CoA extender unit. The PpsB and PpsC proteins add the second and third malonyl-CoA extender units. PpsD adds an (R)-methylmalonyl unit and PpsE adds a second (R)-methylmalonyl unit. The incorporation of the methylmalonyl units results in formation of two branched methyl groups in the elongated product. The chain is Phenolphthiocerol/phthiocerol polyketide synthase subunit C (ppsD) from Mycobacterium tuberculosis (strain CDC 1551 / Oshkosh).